The sequence spans 375 residues: Alcohol dehydrogenase 1 (375 aa).

Ala-1 carries the post-translational modification N-acetylalanine. The Zn(2+) site is built by Cys-46, His-68, Cys-98, Cys-101, Cys-104, Cys-112, and Cys-175. Residues 200 to 205 (GLGGVG), Asp-224, Lys-229, 293 to 295 (VGL), and Arg-370 contribute to the NAD(+) site.

Belongs to the zinc-containing alcohol dehydrogenase family. Class-I subfamily. It depends on Zn(2+) as a cofactor.

It is found in the cytoplasm. The enzyme catalyses a primary alcohol + NAD(+) = an aldehyde + NADH + H(+). It carries out the reaction a secondary alcohol + NAD(+) = a ketone + NADH + H(+). The sequence is that of Alcohol dehydrogenase 1 from Pelophylax perezi (Perez's frog).